The sequence spans 520 residues: Cyclin-L2 (520 aa).

Cyclin-like stretches follow at residues 81–183 (ELIQ…RVLK) and 196–280 (KIIV…KILQ). The segment at 309 to 520 (RAKGLLPPGS…DHPGHSRHRR (212 aa)) is disordered. 4 positions are modified to phosphoserine: Ser-330, Ser-337, Ser-347, and Ser-350. Residues 356–366 (RKMEGPKKAKG) are compositionally biased toward basic and acidic residues. Phosphoserine is present on Ser-368. The tract at residues 384-422 (RSREQSYSRSPSRSASPKRRKSDSGSTSGGSKSQSRSRS) is RS. The segment covering 407–429 (SGSTSGGSKSQSRSRSRSDSPPR) has biased composition (low complexity). Over residues 440–453 (SEVRGSRKSKDCKH) the composition is skewed to basic and acidic residues. Positions 454–471 (LTQKPHKSRSRSSSRSRS) are enriched in basic residues. Basic and acidic residues-rich tracts occupy residues 472–481 (RSRERTDSSG) and 489–514 (YYRD…DHPG).

The protein belongs to the cyclin family. Cyclin L subfamily. In terms of assembly, interacts with CDK11A, CDK11B, CDK12, CDK13 and POLR2A, the hyperphosphorylated C-terminal domain (CTD) of RNA polymerase II. May form a ternary complex with CDK11B and casein kinase II (CKII). Interacts with pre-mRNA-splicing factors, including at least SRSF1, SRSF2 and SRSF7/SLU7.

It localises to the nucleus speckle. Its subcellular location is the nucleus. It is found in the nucleoplasm. Functionally, involved in pre-mRNA splicing. May induce cell death, possibly by acting on the transcription and RNA processing of apoptosis-related factors. In Rattus norvegicus (Rat), this protein is Cyclin-L2 (Ccnl2).